Here is a 469-residue protein sequence, read N- to C-terminus: Probable Xaa-Pro aminopeptidase PEPP (469 aa).

The Mn(2+) site is built by aspartate 257, aspartate 268, glutamate 391, and glutamate 436.

Belongs to the peptidase M24B family. Mn(2+) serves as cofactor.

It catalyses the reaction Release of any N-terminal amino acid, including proline, that is linked to proline, even from a dipeptide or tripeptide.. Its function is as follows. Catalyzes the removal of a penultimate prolyl residue from the N-termini of peptides. The polypeptide is Probable Xaa-Pro aminopeptidase PEPP (PEPP) (Fusarium vanettenii (strain ATCC MYA-4622 / CBS 123669 / FGSC 9596 / NRRL 45880 / 77-13-4) (Fusarium solani subsp. pisi)).